The sequence spans 217 residues: 25 kDa ookinete surface antigen (217 aa).

Residues 1-16 (MNKLYSLFLFLFIQLS) form the signal peptide. Residues 30–59 (CKRGFLIQMSGHLECKCENDLVLVNEETCE) enclose the EGF-like 1; truncated domain. EGF-like domains lie at 61-106 (KVLK…NVCI), 106-150 (IPNE…NKCS), and 153-193 (GETK…SICT). 9 cysteine pairs are disulfide-bonded: C65–C80, C74–C92, C94–C105, C110–C120, C115–C133, C135–C149, C157–C168, C161–C177, and C179–C192. N112 carries an N-linked (GlcNAc...) asparagine glycan. N-linked (GlcNAc...) asparagine glycans are attached at residues N165 and N187. S196 carries GPI-anchor amidated serine lipidation. A propeptide spans 197–217 (AYNILNLSIMFILFSVCFFIM) (removed in mature form). Residue N202 is glycosylated (N-linked (GlcNAc...) asparagine).

The protein localises to the cell membrane. In Plasmodium falciparum (isolate NF54), this protein is 25 kDa ookinete surface antigen.